An 889-amino-acid chain; its full sequence is Translation initiation factor IF-2 (889 aa).

Basic and acidic residues predominate over residues 115-236; the sequence is EAEAQAKAEA…EAERYSDHHI (122 aa). Residues 115–293 form a disordered region; the sequence is EAEAQAKAEA…RNRSTAPESM (179 aa). The segment covering 257–270 has biased composition (basic residues); sequence GRRARNKNTAKTKR. Over residues 271 to 280 the composition is skewed to basic and acidic residues; the sequence is GGKDARDGRE. The region spanning 389-558 is the tr-type G domain; the sequence is PRAPVVTIMG…LLQAEVLELK (170 aa). The G1 stretch occupies residues 398-405; that stretch reads GHVDHGKT. 398 to 405 is a binding site for GTP; that stretch reads GHVDHGKT. Positions 423-427 are G2; the sequence is GITQH. Positions 444-447 are G3; sequence DTPG. Residues 444–448 and 498–501 each bind GTP; these read DTPGH and NKMD. Positions 498–501 are G4; sequence NKMD. The tract at residues 534 to 536 is G5; sequence SAK.

It belongs to the TRAFAC class translation factor GTPase superfamily. Classic translation factor GTPase family. IF-2 subfamily.

It is found in the cytoplasm. Functionally, one of the essential components for the initiation of protein synthesis. Protects formylmethionyl-tRNA from spontaneous hydrolysis and promotes its binding to the 30S ribosomal subunits. Also involved in the hydrolysis of GTP during the formation of the 70S ribosomal complex. The chain is Translation initiation factor IF-2 from Shewanella sp. (strain ANA-3).